The chain runs to 327 residues: Phosphoenolpyruvate transferase (327 aa).

Asp59 is a 7,8-didemethyl-8-hydroxy-5-deazariboflavin binding site.

Belongs to the CofD family. Homodimer. Mg(2+) serves as cofactor.

The enzyme catalyses enolpyruvoyl-2-diphospho-5'-guanosine + 7,8-didemethyl-8-hydroxy-5-deazariboflavin = dehydro coenzyme F420-0 + GMP + H(+). Its pathway is cofactor biosynthesis; coenzyme F420 biosynthesis. Catalyzes the transfer of the phosphoenolpyruvate moiety from enoylpyruvoyl-2-diphospho-5'-guanosine (EPPG) to 7,8-didemethyl-8-hydroxy-5-deazariboflavin (FO) with the formation of dehydro coenzyme F420-0 and GMP. In Mycolicibacterium smegmatis (strain ATCC 700084 / mc(2)155) (Mycobacterium smegmatis), this protein is Phosphoenolpyruvate transferase.